Consider the following 101-residue polypeptide: uncharacterized protein (101 aa).

Over residues 1–12 (MAAFQHRAKRSK) the composition is skewed to basic residues. Disordered stretches follow at residues 1-30 (MAAFQHRAKRSKNGASAKQGKISKADKKRA) and 65-87 (AQDQRSDAQAQQQRAQERSNVDK). Low complexity predominate over residues 65–78 (AQDQRSDAQAQQQR).

This is an uncharacterized protein from Eremothecium gossypii (strain ATCC 10895 / CBS 109.51 / FGSC 9923 / NRRL Y-1056) (Yeast).